A 1225-amino-acid chain; its full sequence is Structural maintenance of chromosomes protein 1 (1225 aa).

33 to 40 (GPNGSGKS) contacts ATP. A coiled-coil region spans residues 173 to 489 (SGSIQYKKEY…SANNQEYDLN (317 aa)). Residues 527–641 (PGVKGLVHDL…CNTLNIAKDL (115 aa)) enclose the SMC hinge domain. A coiled-coil region spans residues 679 to 1063 (KEEYQSLMSL…LKIKKKRKEL (385 aa)). Residues 1057–1061 (KKKRK) carry the Nuclear localization signal motif.

The protein belongs to the SMC family. SMC1 subfamily. In terms of assembly, cohesin complexes are composed of the SMC1 and SMC3 heterodimer attached via their SMC hinge domain, MCD1/SCC1 which link them, and IRR1/SCC3, which interacts with MCD1. The cohesin complex also interacts with SCC2, which is required for its association with chromosomes.

The protein localises to the nucleus. The protein resides in the chromosome. Its function is as follows. Involved in chromosome cohesion during cell cycle and in DNA repair. Central component of cohesin complex. The cohesin complex is required for the cohesion of sister chromatids after DNA replication. The cohesin complex apparently forms a large proteinaceous ring within which sister chromatids can be trapped. At anaphase, the complex is cleaved and dissociates from chromatin, allowing sister chromatids to segregate. The protein is Structural maintenance of chromosomes protein 1 (SMC1) of Saccharomyces cerevisiae (strain ATCC 204508 / S288c) (Baker's yeast).